We begin with the raw amino-acid sequence, 239 residues long: Serine protease SplC (239 aa).

The signal sequence occupies residues 1-36; sequence MNKNIVIKSMAALAILTSVTGINAAVVEETQQIANA. Active-site charge relay system residues include histidine 75, aspartate 113, and serine 193.

The protein belongs to the peptidase S1B family.

Its subcellular location is the secreted. The chain is Serine protease SplC (splC) from Staphylococcus aureus (strain USA300 / TCH1516).